Consider the following 423-residue polypeptide: UDP-N-acetylglucosamine 1-carboxyvinyltransferase 1 (423 aa).

Residue 23–24 (KN) coordinates phosphoenolpyruvate. Arginine 96 is a binding site for UDP-N-acetyl-alpha-D-glucosamine. The active-site Proton donor is the cysteine 120. The residue at position 120 (cysteine 120) is a 2-(S-cysteinyl)pyruvic acid O-phosphothioketal. Residues 125-129 (RPIDL), aspartate 309, and valine 331 contribute to the UDP-N-acetyl-alpha-D-glucosamine site.

This sequence belongs to the EPSP synthase family. MurA subfamily.

The protein localises to the cytoplasm. The catalysed reaction is phosphoenolpyruvate + UDP-N-acetyl-alpha-D-glucosamine = UDP-N-acetyl-3-O-(1-carboxyvinyl)-alpha-D-glucosamine + phosphate. It functions in the pathway cell wall biogenesis; peptidoglycan biosynthesis. Its function is as follows. Cell wall formation. Adds enolpyruvyl to UDP-N-acetylglucosamine. The chain is UDP-N-acetylglucosamine 1-carboxyvinyltransferase 1 from Streptococcus mutans serotype c (strain ATCC 700610 / UA159).